A 131-amino-acid polypeptide reads, in one-letter code: Protein TAP2 (131 aa).

The first 22 residues, 1 to 22 (MAKSSPTYTVLFLLGLLALSTA), serve as a signal peptide directing secretion. Residues 75–101 (ARSGGETDVKKMEGSMPDQGKTAGRDQ) are disordered.

Tapetum of anthers.

The protein is Protein TAP2 (TAP2) of Antirrhinum majus (Garden snapdragon).